A 385-amino-acid polypeptide reads, in one-letter code: Histidinol-phosphate aminotransferase (385 aa).

Lys235 carries the N6-(pyridoxal phosphate)lysine modification.

It belongs to the class-II pyridoxal-phosphate-dependent aminotransferase family. Histidinol-phosphate aminotransferase subfamily. In terms of assembly, homodimer. Pyridoxal 5'-phosphate is required as a cofactor.

The catalysed reaction is L-histidinol phosphate + 2-oxoglutarate = 3-(imidazol-4-yl)-2-oxopropyl phosphate + L-glutamate. It functions in the pathway amino-acid biosynthesis; L-histidine biosynthesis; L-histidine from 5-phospho-alpha-D-ribose 1-diphosphate: step 7/9. This chain is Histidinol-phosphate aminotransferase, found in Nocardia farcinica (strain IFM 10152).